The primary structure comprises 326 residues: ELAV-like protein 1 (326 aa).

3 consecutive RRM domains span residues Thr-20 to Pro-98, Ala-106 to Asn-186, and Trp-244 to Ser-322.

It belongs to the RRM elav family. As to quaternary structure, interacts (via RRM3) with cirbp. Unable to form oligomers. Part of a ribonucleoprotein (RNP) complex, at least composed of elavl1/elrA and/or elavl2/elrB, igf2bp3/vg1RBP, ddx6/Xp54, ybx2/frgy2, lsm14b/rap55b and, in a subset of RNP complexes, stau1/staufen.

It localises to the cytoplasm. The protein resides in the cell cortex. RNA-binding protein that binds to the 3'-UTR region of mRNAs and increases their stability. Involved in embryonic stem cells (ESCs) differentiation: preferentially binds mRNAs that are not methylated by N6-methyladenosine (m6A), stabilizing them, promoting ESCs differentiation. Binds to poly-U elements and AU-rich elements (AREs) in the 3'-UTR of target mRNAs. Acts cooperatively with cribp to stabilize AU-rich sequence (ARE)-containing mRNAs. May play a role during gastrulation. Required for the vegetal localization of vg1 mRNA. In Xenopus tropicalis (Western clawed frog), this protein is ELAV-like protein 1.